The following is a 394-amino-acid chain: 1-deoxy-D-xylulose 5-phosphate reductoisomerase (394 aa).

T12, G13, S14, I15, K39, Q40, and N126 together coordinate NADPH. K127 serves as a coordination point for 1-deoxy-D-xylulose 5-phosphate. Position 128 (E128) interacts with NADPH. D152 contacts Mn(2+). 1-deoxy-D-xylulose 5-phosphate-binding residues include S153, E154, S183, and H206. Residue E154 coordinates Mn(2+). G212 contacts NADPH. 1-deoxy-D-xylulose 5-phosphate-binding residues include S219, N224, K225, and E228. E228 provides a ligand contact to Mn(2+).

The protein belongs to the DXR family. Mg(2+) serves as cofactor. Mn(2+) is required as a cofactor.

The enzyme catalyses 2-C-methyl-D-erythritol 4-phosphate + NADP(+) = 1-deoxy-D-xylulose 5-phosphate + NADPH + H(+). It participates in isoprenoid biosynthesis; isopentenyl diphosphate biosynthesis via DXP pathway; isopentenyl diphosphate from 1-deoxy-D-xylulose 5-phosphate: step 1/6. Its function is as follows. Catalyzes the NADPH-dependent rearrangement and reduction of 1-deoxy-D-xylulose-5-phosphate (DXP) to 2-C-methyl-D-erythritol 4-phosphate (MEP). The sequence is that of 1-deoxy-D-xylulose 5-phosphate reductoisomerase from Neisseria gonorrhoeae (strain ATCC 700825 / FA 1090).